We begin with the raw amino-acid sequence, 666 residues long: MLPEAGSLWLLKLLRDIQLAQFYWPILEELNVTRPEHFDFVKPEDLDGIGMGRPAQRRLSEALKRLRSGPKSKNWVYKILGGFAPEHKEPTLPSDSPRHLPEPEGGLKCLIPEGAVCRGELLGSGCFGVVHRGLWTLPSGKSVPVAVKSLRVGPEGPMGTELGDFLREVSVMMNLEHPHVLRLHGLVLGQPLQMVMELAPLGSLHARLTAPAPTPPLLVALLCLFLRQLAGAMAYLGARGLVHRDLATRNLLLASPRTIKVADFGLVRPLGGARGRYVMGGPRPIPYAWCAPESLRHGAFSSASDVWMFGVTLWEMFSGGEEPWAGVPPYLILQRLEDRARLPRPPLCSRALYSLALRCWAPHPADRPSFSHLEGLLQEAGPSEACCVRDVTEPGALRMETGDPITVIEGSSSFHSPDSTIWKGQNGRTFKVGSFPASAVTLADAGGLPATRPVHRGTPARGDQHPGSIDGDRKKANLWDAPPARGQRRNMPLERMKGISRSLESVLSLGPRPTGGGSSPPEIRQARAVPQGPPGLPPRPPLSSSSPQPSQPSRERLPWPKRKPPHNHPMGMPGARKAAALSGGLLSDPELQRKIMEVELSVHGVTHQECQTALGATGGDVVSAIRNLKVDQLFHLSSRSRADCWRILEHYQWDLSAASRYVLARP.

Residues Ser-60 and Ser-96 each carry the phosphoserine modification. Positions 116 to 377 constitute a Protein kinase domain; the sequence is VCRGELLGSG…PSFSHLEGLL (262 aa). ATP is bound by residues 122–130 and Lys-148; that span reads LGSGCFGVV. Catalysis depends on Asp-245, which acts as the Proton acceptor. Phosphoserine occurs at positions 255 and 411. The SH3 domain occupies 380 to 445; it reads AGPSEACCVR…PASAVTLADA (66 aa). The segment at 446 to 493 is disordered; sequence GGLPATRPVHRGTPARGDQHPGSIDGDRKKANLWDAPPARGQRRNMPL. At Ser-502 the chain carries Phosphoserine. Residues 506 to 579 form a disordered region; that stretch reads VLSLGPRPTG…MGMPGARKAA (74 aa). Phosphothreonine is present on Thr-514. Phosphoserine is present on Ser-519. Over residues 531–541 the composition is skewed to pro residues; it reads QGPPGLPPRPP. Residues 542–552 show a composition bias toward low complexity; sequence LSSSSPQPSQP. A Phosphoserine modification is found at Ser-582.

Belongs to the protein kinase superfamily. Tyr protein kinase family. In terms of assembly, interacts with the SH3 domain of PLCG1 via its Pro-rich domain. In terms of processing, autophosphorylated on tyrosine residues. As to expression, expressed in all umbilical cord blood, bone marrow and adult blood cell sub-populations and in several leukemia cell lines. Highly expressed in fetal blood, brain, lung, liver and kidney. Detected at lower levels in adult prostate, testis, ovary, small intestine and colon. Not expressed in adult lung, liver, kidney or brain.

It localises to the cytoplasm. Its subcellular location is the membrane. It catalyses the reaction L-tyrosyl-[protein] + ATP = O-phospho-L-tyrosyl-[protein] + ADP + H(+). Involved in negative regulation of cell growth. Has tumor suppressor properties. Plays a negative regulatory role in the Ras-MAPK pathway. May function in signaling pathways utilized broadly during fetal development and more selectively in adult tissues and in cells of the lymphohematopoietic system. Could specifically be involved in phospholipid signal transduction. This Homo sapiens (Human) protein is Non-receptor tyrosine-protein kinase TNK1.